The primary structure comprises 118 residues: Putative pterin-4-alpha-carbinolamine dehydratase (118 aa).

Belongs to the pterin-4-alpha-carbinolamine dehydratase family.

The catalysed reaction is (4aS,6R)-4a-hydroxy-L-erythro-5,6,7,8-tetrahydrobiopterin = (6R)-L-erythro-6,7-dihydrobiopterin + H2O. The protein is Putative pterin-4-alpha-carbinolamine dehydratase of Xanthomonas euvesicatoria pv. vesicatoria (strain 85-10) (Xanthomonas campestris pv. vesicatoria).